The chain runs to 307 residues: Phosphoribosylaminoimidazole-succinocarboxamide synthase (307 aa).

This sequence belongs to the SAICAR synthetase family.

It catalyses the reaction 5-amino-1-(5-phospho-D-ribosyl)imidazole-4-carboxylate + L-aspartate + ATP = (2S)-2-[5-amino-1-(5-phospho-beta-D-ribosyl)imidazole-4-carboxamido]succinate + ADP + phosphate + 2 H(+). It participates in purine metabolism; IMP biosynthesis via de novo pathway; 5-amino-1-(5-phospho-D-ribosyl)imidazole-4-carboxamide from 5-amino-1-(5-phospho-D-ribosyl)imidazole-4-carboxylate: step 1/2. The chain is Phosphoribosylaminoimidazole-succinocarboxamide synthase from Thermobifida fusca (strain YX).